Reading from the N-terminus, the 394-residue chain is Elongation factor Tu (394 aa).

Positions 10–204 constitute a tr-type G domain; that stretch reads KPHVNVGTIG…ALDSYIPEPE (195 aa). The tract at residues 19–26 is G1; the sequence is GHVDHGKT. A GTP-binding site is contributed by 19-26; that stretch reads GHVDHGKT. T26 contacts Mg(2+). Residues 60 to 64 form a G2 region; sequence GITIN. A G3 region spans residues 81–84; it reads DCPG. GTP-binding positions include 81-85 and 136-139; these read DCPGH and NKCD. Residues 136 to 139 form a G4 region; that stretch reads NKCD. Residues 174–176 are G5; the sequence is SAL.

It belongs to the TRAFAC class translation factor GTPase superfamily. Classic translation factor GTPase family. EF-Tu/EF-1A subfamily. Monomer.

It is found in the cytoplasm. The catalysed reaction is GTP + H2O = GDP + phosphate + H(+). In terms of biological role, GTP hydrolase that promotes the GTP-dependent binding of aminoacyl-tRNA to the A-site of ribosomes during protein biosynthesis. The polypeptide is Elongation factor Tu (Shewanella sp. (strain ANA-3)).